Reading from the N-terminus, the 854-residue chain is Arsenate respiratory reductase molybdopterin-containing subunit ArrA (854 aa).

A signal peptide (tat-type signal) is located at residues 1-41 (MKKENQVNLGRRQLLKSTAAGTVLTGIGGTLSFTPIVEGIA). A 4Fe-4S Mo/W bis-MGD-type domain is found at 54-110 (GEWLATTCQGCTSWCAKQIYVMDGRALKVRGNPNSGVHGMSSCPRQHLSLQQVYDPD). [4Fe-4S] cluster-binding residues include Cys61, Cys64, Cys68, and Cys96. Arg165 lines the arsenite pocket. Residue Tyr166 coordinates arsenate. Arsenite is bound at residue His189. Ser190 is a binding site for arsenate. Cys193 is a Mo-bis(molybdopterin guanine dinucleotide) binding site. Lys198 contributes to the arsenate binding site. Tyr210 contributes to the arsenite binding site.

This sequence belongs to the prokaryotic molybdopterin-containing oxidoreductase family. Heterodimer composed of one large subunit (ArrA) and one small subunit (ArrB). [4Fe-4S] cluster serves as cofactor. Requires Mo-bis(molybdopterin guanine dinucleotide) as cofactor. Post-translationally, predicted to be exported by the Tat system. The position of the signal peptide cleavage has not been experimentally proven.

The protein resides in the periplasm. The enzyme catalyses arsenite + A + H2O = arsenate + AH2 + H(+). With respect to regulation, phosphate is a competitive inhibitor. Component of the arsenate respiratory reductase (Arr) complex, which catalyzes the reduction of arsenate (As(V)) to arsenite (As(III)). ArrA is the arsenate-binding subunit. The periplasmic localization of this complex may allow the cell to couple arsenate reduction to energy production before arsenate can be transported to the cell cytoplasm and enter the ars detoxification pathway, an energy-requiring process. The sequence is that of Arsenate respiratory reductase molybdopterin-containing subunit ArrA from Shewanella sp. (strain ANA-3).